Reading from the N-terminus, the 149-residue chain is Large ribosomal subunit protein uL15 (149 aa).

The segment at 21–54 (RGSASGLGCTSGKGNKGQNARSGGGVRPGFEGGQ) is disordered. 2 stretches are compositionally biased toward gly residues: residues 23–35 (SASGLGCTSGKGN) and 42–52 (SGGGVRPGFEG).

The protein belongs to the universal ribosomal protein uL15 family. In terms of assembly, part of the 50S ribosomal subunit.

Its function is as follows. Binds to the 23S rRNA. In Lawsonia intracellularis (strain PHE/MN1-00), this protein is Large ribosomal subunit protein uL15.